The chain runs to 300 residues: N-acetylmuramic acid 6-phosphate etherase (300 aa).

The region spanning 57–220 (IAVAFQSGGR…TTGAMIRTGK (164 aa)) is the SIS domain. Glutamate 85 acts as the Proton donor in catalysis. Glutamate 116 is a catalytic residue.

This sequence belongs to the GCKR-like family. MurNAc-6-P etherase subfamily. In terms of assembly, homodimer.

It catalyses the reaction N-acetyl-D-muramate 6-phosphate + H2O = N-acetyl-D-glucosamine 6-phosphate + (R)-lactate. The protein operates within amino-sugar metabolism; 1,6-anhydro-N-acetylmuramate degradation. It participates in amino-sugar metabolism; N-acetylmuramate degradation. It functions in the pathway cell wall biogenesis; peptidoglycan recycling. Its function is as follows. Specifically catalyzes the cleavage of the D-lactyl ether substituent of MurNAc 6-phosphate, producing GlcNAc 6-phosphate and D-lactate. Together with AnmK, is also required for the utilization of anhydro-N-acetylmuramic acid (anhMurNAc) either imported from the medium or derived from its own cell wall murein, and thus plays a role in cell wall recycling. This Aliivibrio fischeri (strain MJ11) (Vibrio fischeri) protein is N-acetylmuramic acid 6-phosphate etherase.